Reading from the N-terminus, the 356-residue chain is Popeye domain-containing protein 1 (356 aa).

At 1 to 48 (MNFTEPSPLAQSTVVGFLPELESLTPVPSNETSCENWREVHHLVFHAA) the chain is on the extracellular side. Residues Asn2 and Asn30 are each glycosylated (N-linked (GlcNAc...) asparagine). The helical transmembrane segment at 49–69 (NVCFAVGLLIPTTLHLHMILL) threads the bilayer. A topological domain (cytoplasmic) is located at residue Arg70. The helical transmembrane segment at 71-91 (VMLSIGCTLYVVWATLYRCAL) threads the bilayer. Asp92 is a topological domain (extracellular). The chain crosses the membrane as a helical span at residues 93–113 (MMIWNSVFLGINILHLSYLLY). Residues 93–115 (MMIWNSVFLGINILHLSYLLYKK) are required for interaction with CAV3. Residues 114–356 (KKRPVKIEKD…VPVSPAHQLP (243 aa)) are Cytoplasmic-facing. Positions 136 to 186 (RVPPDLFRRLTGQFCVIQTLKRGQVYATEDKTSVDDRLSILLKGRMKVSYR) are required for interaction with KCNK2. 2 positions are modified to phosphoserine: Ser295 and Ser318. Low complexity predominate over residues 313 to 323 (SSSTASLPMSS). Positions 313 to 356 (SSSTASLPMSSPQQRASPKMKPIEEGLEDDDEVFVPVSPAHQLP) are disordered.

This sequence belongs to the popeye family. In terms of assembly, homodimer. Homodimerization requires the C-terminus cytoplasmic region. Interacts (via the C-terminus cytoplasmic tail) with TJP1. Interacts (via the C-terminus cytoplasmic tail) with ARHGEF25/GEFT (via the DH domain). Interacts (via the C-terminus cytoplasmic tail) with VAMP3. Interacts with KCNK2; the interaction enhances KCNK2 surface expression and is inhibited by cAMP. Interacts with CAV3. In terms of tissue distribution, strongly expressed in heart and skeletal muscle. Weakly expressed in brain, spleen, liver, kidney and lung.

It is found in the lateral cell membrane. The protein localises to the cell junction. Its subcellular location is the tight junction. The protein resides in the membrane. It localises to the cell membrane. It is found in the sarcolemma. The protein localises to the caveola. In terms of biological role, cell adhesion molecule involved in the establishment and/or maintenance of cell integrity. Involved in the formation and regulation of the tight junction (TJ) paracellular permeability barrier in epithelial cells. Plays a role in VAMP3-mediated vesicular transport and recycling of different receptor molecules through its interaction with VAMP3. Plays a role in the regulation of cell shape and movement by modulating the Rho-family GTPase activity through its interaction with ARHGEF25/GEFT. Induces primordial adhesive contact and aggregation of epithelial cells in a Ca(2+)-independent manner. Important for skeletal muscle and heart development. Also involved in striated muscle regeneration and repair and in the regulation of cell spreading. Important for the maintenance of cardiac function. Plays a regulatory function in heart rate dynamics mediated, at least in part, through cAMP-binding and, probably, by increasing cell surface expression of the potassium channel KCNK2 and enhancing current density. Is a caveolae-associated protein important for the preservation of caveolae structural and functional integrity as well as for heart protection against ischemia injury. This chain is Popeye domain-containing protein 1 (Popdc1), found in Rattus norvegicus (Rat).